Reading from the N-terminus, the 138-residue chain is Putative pre-16S rRNA nuclease (138 aa).

Belongs to the YqgF nuclease family.

It is found in the cytoplasm. Functionally, could be a nuclease involved in processing of the 5'-end of pre-16S rRNA. This chain is Putative pre-16S rRNA nuclease, found in Caldicellulosiruptor saccharolyticus (strain ATCC 43494 / DSM 8903 / Tp8T 6331).